The following is a 335-amino-acid chain: tRNA N6-adenosine threonylcarbamoyltransferase (335 aa).

Histidine 111 and histidine 115 together coordinate Fe cation. Residues 133–137, aspartate 166, glycine 179, and asparagine 276 contribute to the substrate site; that span reads LISGG. Aspartate 301 provides a ligand contact to Fe cation.

Belongs to the KAE1 / TsaD family. Requires Fe(2+) as cofactor.

It localises to the cytoplasm. The catalysed reaction is L-threonylcarbamoyladenylate + adenosine(37) in tRNA = N(6)-L-threonylcarbamoyladenosine(37) in tRNA + AMP + H(+). Functionally, required for the formation of a threonylcarbamoyl group on adenosine at position 37 (t(6)A37) in tRNAs that read codons beginning with adenine. Is involved in the transfer of the threonylcarbamoyl moiety of threonylcarbamoyl-AMP (TC-AMP) to the N6 group of A37, together with TsaE and TsaB. TsaD likely plays a direct catalytic role in this reaction. This chain is tRNA N6-adenosine threonylcarbamoyltransferase, found in Wolbachia sp. subsp. Brugia malayi (strain TRS).